We begin with the raw amino-acid sequence, 465 residues long: Tyrosine 3-monooxygenase (465 aa).

Fe cation contacts are provided by H294, H299, and E339.

It belongs to the biopterin-dependent aromatic amino acid hydroxylase family. Fe(2+) is required as a cofactor.

It localises to the cytoplasm. The protein localises to the perinuclear region. The enzyme catalyses (6R)-L-erythro-5,6,7,8-tetrahydrobiopterin + L-tyrosine + O2 = (4aS,6R)-4a-hydroxy-L-erythro-5,6,7,8-tetrahydrobiopterin + L-dopa. Its pathway is catecholamine biosynthesis; dopamine biosynthesis; dopamine from L-tyrosine: step 1/2. This Schistosoma mansoni (Blood fluke) protein is Tyrosine 3-monooxygenase (TH).